The primary structure comprises 893 residues: MRSLRRVLLQLVLLAGVAFRGVRFDDAADAAAAAQGSSDLFELPSPSPTLALPGGGDEGASTEIIAAPWPGRHGLFTPPRSTSQPARAVVQPAADFGSQLQFYDNGTIQLVDLLSKLPRWQFSTGPPLSKHITTSKPDLNYVIYLDGSETSDLIEVHNGSGVRLPWKLEEFIAETPYIRDSFVTIGSKVSTTFVVNADSGEIIYKHSLPVALNEVGGPLVEEIPSKLDAARSGTSANIIVVVRTDYSISASDLGEHLFNWTRTSFTANYYARYGHQDMLAQSSCLRGNIPCIRTEGPPIKLYLPDSSSDNAIVLRPVNEVSAVDALEPLLPPKKLPQPAGESNVALDSAQNQTADIALGHFVPADTELTNSVTKFSYRWLFPTFLMLLIMACLVKLADASKYCRQFVIRFLKPFMRDEKLMDPRGKSEGTSKRRKARKKDGLINSTQIFSASDKEGNGTGGSTEAQSNKAHDSTNVELPNGLNGRQIGKLCVYSKEIGKGSNGTVVFEGSYGGREVAVKRLLRSHNDIASKEIENLIASDQDPNIVRMYGFEQDNDFVYISLERCRCSLADLIQLHSVPPFSNTKGTDIELWRQDGLPSAQLLKLMRDVVAGIVHLHSLGIIHRDLKPQNVLISKEGPLRAKLSDMGISKRLQEDMTSVSHHGTGFGSSGWQAPEQLRHGRQTRAIDLFSLGCLIFYCITKGKHPFGEYYERDMKIINNQFDLFIVDHIPEAVHLISQLLDPDPEKRPTAVYVMHHPFFWSPELCLSFLRDTSDRIEKTSETDLIDALEGINVEAFGKNWGEKLDAALLADMGRYRKYSFESTRDLLRLIRNKSGHYREFSDDLKELLGSLPEGFVQYFSSRFPKLLIKVYEVMSEHCKDEEAFSKYFLGSSA.

An N-terminal signal peptide occupies residues 1–19 (MRSLRRVLLQLVLLAGVAF). The Lumenal segment spans residues 20–379 (RGVRFDDAAD…NSVTKFSYRW (360 aa)). Residues Asn-105, Asn-158, Asn-259, and Asn-351 are each glycosylated (N-linked (GlcNAc...) asparagine). Residues 380-397 (LFPTFLMLLIMACLVKLA) form a helical membrane-spanning segment. The Cytoplasmic portion of the chain corresponds to 398–893 (DASKYCRQFV…FSKYFLGSSA (496 aa)). The interval 451 to 478 (ASDKEGNGTGGSTEAQSNKAHDSTNVEL) is disordered. The region spanning 491 to 759 (CVYSKEIGKG…AVYVMHHPFF (269 aa)) is the Protein kinase domain. ATP-binding positions include 497–505 (IGKGSNGTV) and Lys-519. Asp-625 acts as the Proton acceptor in catalysis. A KEN domain is found at 762-890 (PELCLSFLRD…EEAFSKYFLG (129 aa)).

The protein belongs to the protein kinase superfamily. Ser/Thr protein kinase family. In terms of assembly, homodimer; disulfide-linked. Dimer formation is driven by hydrophobic interactions within the N-terminal luminal domains and stabilized by disulfide bridges. Autophosphorylated. Expressed in roots, nodes, internodes, leaf sheaths, leaf blades, young ears and mature ears.

It localises to the endoplasmic reticulum membrane. It carries out the reaction L-seryl-[protein] + ATP = O-phospho-L-seryl-[protein] + ADP + H(+). The catalysed reaction is L-threonyl-[protein] + ATP = O-phospho-L-threonyl-[protein] + ADP + H(+). In terms of biological role, involved in endoplasmic reticulum (ER) stress response. Senses unfolded proteins in the lumen of the ER via its N-terminal domain which leads to enzyme auto-activation. The active endoribonuclease domain splices bZIP50 mRNA to generate a new C-terminus, converting it into a potent unfolded-protein response (UPR) transcriptional activator, which then induces transcription of UPR target genes, such as luminal-binding protein (BiP) chaperones. This chain is Serine/threonine-protein kinase/endoribonuclease IRE1, found in Oryza sativa subsp. japonica (Rice).